The sequence spans 342 residues: 11-beta-hydroxysteroid dehydrogenase-like 6 (342 aa).

The chain crosses the membrane as a helical; Signal-anchor for type II membrane protein span at residues 10 to 30 (FLFPLLTLYALLVFYPTYQRL). NADP(+) is bound by residues 54–80 (GAASGIGEALAYEYGKRGAYLALVDIR) and Asp-105. Ser-184 is a binding site for substrate. Tyr-197 functions as the Proton acceptor in the catalytic mechanism. NADP(+)-binding positions include 197–201 (YCASK) and Lys-201.

Belongs to the short-chain dehydrogenases/reductases (SDR) family.

The protein localises to the membrane. The sequence is that of 11-beta-hydroxysteroid dehydrogenase-like 6 (HSD6) from Arabidopsis thaliana (Mouse-ear cress).